Here is a 2201-residue protein sequence, read N- to C-terminus: RNA-directed RNA polymerase L (2201 aa).

The endonuclease stretch occupies residues 26 to 285; it reads KNIMLAQTQI…VCSKSVEYTF (260 aa). The Mn(2+) site is built by glutamate 51, aspartate 88, and glutamate 101. The active site involves lysine 114. In terms of domain architecture, RdRp catalytic spans 1156–1352; the sequence is LDMKSVVRQS…FLSDRLNKFV (197 aa). Aspartate 1312 lines the Mg(2+) pocket.

It belongs to the Bunyavirales RNA polymerase family. In terms of assembly, homomultimer; the oligomeric structure is essential for the polymerase activity. Interacts with nucleoprotein N. Interacts with protein Z; this interaction inhibits viral transcription and replication, Z partially blocks the product exit tunnel for the releasing nascent RNA product. Mn(2+) serves as cofactor. It depends on Mg(2+) as a cofactor.

The protein localises to the virion. The protein resides in the host cytoplasm. The catalysed reaction is RNA(n) + a ribonucleoside 5'-triphosphate = RNA(n+1) + diphosphate. In terms of biological role, RNA-dependent RNA polymerase, which is responsible for the replication and transcription of the viral RNA genome using antigenomic RNA as an intermediate. During transcription, synthesizes subgenomic RNAs and assures their capping by a cap-snatching mechanism, which involves the endonuclease activity cleaving the host capped pre-mRNAs. These short capped RNAs are then used as primers for viral transcription. The 3'-end of subgenomic mRNAs molecules are heterogeneous and not polyadenylated. The replicase function is to direct synthesis of antigenomic and genomic RNA which are encapsidated and non capped. As a consequence of the use of the same enzyme for both transcription and replication, these mechanisms need to be well coordinated. These processes may be regulated by proteins N and Z in a dose-dependent manner. Z protein inhibits the viral polymerase L und thus the viral transcription and RNA synthesis. This chain is RNA-directed RNA polymerase L, found in Oecomys bicolor (Bicolored arboreal rice rat).